A 442-amino-acid polypeptide reads, in one-letter code: MTTQESADIFGNNKSILITNVNDGTGPVDIFIDAEETISDIGCEIRKRHRGEAEFIVDGAGALALPGLSNTHTHAAMSLLRGYADDMILQDWLAQKIWPLEAHLTADDVYWGTRLACLEMIRTGTTAFNDMYFFMESAAKAVDEAGIRALLCYGFIDLGDAEKRERECRATEALVAHIRGLKNSRIHAAAGPHAPYTVSPEGLKWCGEFSREQDIPVHIHLSETEKEVNDCVARHKKRPAALLDECGLLSPRTIAAHGCWLDDAECALLGKRGVSVSHNPASNMKLATHRALPYRELVAAGANVCLGTDGCASNNNLDLFEEMKIAALLQKFFWNDPTVLAAPEALGMATANGAKALGFGDGALVAGAPADLILVTTRTPANTPLHNAASNLVYACSGSAVETTICNGRVLMFDREIPGEEKVLAEAAGAAARLVRRAQTPS.

Zn(2+) is bound by residues His72 and His74. 2 residues coordinate substrate: Glu101 and His193. His220 serves as a coordination point for Zn(2+). Substrate contacts are provided by Glu223 and Asp309. Asp309 serves as a coordination point for Zn(2+).

This sequence belongs to the metallo-dependent hydrolases superfamily. MTA/SAH deaminase family. As to quaternary structure, homotetramer. Zn(2+) is required as a cofactor.

The enzyme catalyses 5'-deoxyadenosine + H2O + H(+) = 5'-deoxyinosine + NH4(+). It catalyses the reaction S-adenosyl-L-homocysteine + H2O + H(+) = S-inosyl-L-homocysteine + NH4(+). It carries out the reaction S-methyl-5'-thioadenosine + H2O + H(+) = S-methyl-5'-thioinosine + NH4(+). The catalysed reaction is adenosine + H2O + H(+) = inosine + NH4(+). Its pathway is amino-acid biosynthesis; S-adenosyl-L-methionine biosynthesis. In terms of biological role, catalyzes the deamination of three SAM-derived enzymatic products, namely 5'-deoxyadenosine, S-adenosyl-L-homocysteine, and 5'-methylthioadenosine, to produce the inosine analogs. Can also deaminate adenosine. The preferred substrate for this enzyme is 5'-deoxyadenosine, but all these substrates are efficiently deaminated. Likely functions in a S-adenosyl-L-methionine (SAM) recycling pathway from S-adenosyl-L-homocysteine (SAH) produced from SAM-dependent methylation reactions. May also be involved in the recycling of 5'-deoxyadenosine, whereupon the 5'-deoxyribose moiety of 5'-deoxyinosine is further metabolized to deoxyhexoses used for the biosynthesis of aromatic amino acids in methanogens. The polypeptide is 5'-deoxyadenosine deaminase (Methanoregula boonei (strain DSM 21154 / JCM 14090 / 6A8)).